Here is a 399-residue protein sequence, read N- to C-terminus: Tryptophan synthase beta chain (399 aa).

An N6-(pyridoxal phosphate)lysine modification is found at K92.

It belongs to the TrpB family. Tetramer of two alpha and two beta chains. Pyridoxal 5'-phosphate is required as a cofactor.

The enzyme catalyses (1S,2R)-1-C-(indol-3-yl)glycerol 3-phosphate + L-serine = D-glyceraldehyde 3-phosphate + L-tryptophan + H2O. Its pathway is amino-acid biosynthesis; L-tryptophan biosynthesis; L-tryptophan from chorismate: step 5/5. The beta subunit is responsible for the synthesis of L-tryptophan from indole and L-serine. The sequence is that of Tryptophan synthase beta chain from Legionella pneumophila (strain Paris).